The sequence spans 134 residues: MFDGIGFMELLLIGILGLVVLGPERLPVAVRSLTGWIRALKRMANSVKDELEQELKIDQLHADLKKAESKGLANLSPELQESIDQLKKAAESVNRPYKVEDTSPVAPKASPDESPSVVEAKSSEATSENSSTPK.

The chain crosses the membrane as a helical span at residues 2-22 (FDGIGFMELLLIGILGLVVLG). Residues 90-134 (AESVNRPYKVEDTSPVAPKASPDESPSVVEAKSSEATSENSSTPK) are disordered. Residues 123 to 134 (SEATSENSSTPK) show a composition bias toward polar residues.

The protein belongs to the TatB family. In terms of assembly, the Tat system comprises two distinct complexes: a TatABC complex, containing multiple copies of TatA, TatB and TatC subunits, and a separate TatA complex, containing only TatA subunits. Substrates initially bind to the TatABC complex, which probably triggers association of the separate TatA complex to form the active translocon.

It is found in the cell inner membrane. Part of the twin-arginine translocation (Tat) system that transports large folded proteins containing a characteristic twin-arginine motif in their signal peptide across membranes. Together with TatC, TatB is part of a receptor directly interacting with Tat signal peptides. TatB may form an oligomeric binding site that transiently accommodates folded Tat precursor proteins before their translocation. The chain is Sec-independent protein translocase protein TatB from Shewanella frigidimarina (strain NCIMB 400).